The chain runs to 447 residues: Putative branched-chain amino acid carrier protein SE_1090 (447 aa).

12 helical membrane-spanning segments follow: residues 5–25, 40–60, 74–94, 114–134, 143–163, 193–213, 229–249, 290–310, 317–337, 350–370, 382–402, and 417–437; these read TWIIGFTLFAMFFGAGNLIFP, ILAFALTGIGLPLLGVVVGAL, PRFSLIFLIIIYLTIGPLFAI, GNLALFIFTVIYFLIVLYLCL, IGSLLTPLLLITIVAMIIKGF, GYLTMDAIASIAFSMIVVNAI, IIAGLIAAIALVFIYISLGYI, LLGIIVSLACLTTACGLIVSV, ILPKIPYKVFVIFFILVSFIL, VPVLSVIYPVAITVILLILIA, IPLIIVAIESILSLITTQGWI, and LEWFPIAVVATLVGYMISYFV.

Belongs to the branched chain amino acid transporter family.

It localises to the cell membrane. Functionally, component of the transport system for branched-chain amino acids (leucine, isoleucine and valine), which is coupled to a proton motive force. This is Putative branched-chain amino acid carrier protein SE_1090 from Staphylococcus epidermidis (strain ATCC 12228 / FDA PCI 1200).